We begin with the raw amino-acid sequence, 288 residues long: Ribonuclease HIII (288 aa).

Residues 76 to 288 form the RNase H type-2 domain; it reads YSAIGSDEVG…KNITKQFIKN (213 aa). Residues aspartate 82, glutamate 83, and aspartate 185 each contribute to the a divalent metal cation site.

This sequence belongs to the RNase HII family. RnhC subfamily. Requires Mn(2+) as cofactor. Mg(2+) serves as cofactor.

The protein localises to the cytoplasm. It carries out the reaction Endonucleolytic cleavage to 5'-phosphomonoester.. Functionally, endonuclease that specifically degrades the RNA of RNA-DNA hybrids. This is Ribonuclease HIII from Phytoplasma mali (strain AT).